Consider the following 371-residue polypeptide: Cytochrome b (371 aa).

Transmembrane regions (helical) follow at residues 25–45 (FGSM…FLAV), 69–90 (WMMQ…YIHI), 105–125 (WMSG…GYVL), and 170–190 (FFAL…LHII). Heme b-binding residues include His-75 and His-89. Heme b is bound by residues His-174 and His-188. His-193 is a binding site for a ubiquinone. A run of 4 helical transmembrane segments spans residues 218–238 (HKDL…VSFS), 280–300 (LGGA…PFTH), 312–332 (LSQL…WAAT), and 339–358 (FIII…LSIP).

Belongs to the cytochrome b family. The cytochrome bc1 complex contains 3 respiratory subunits (MT-CYB, CYC1 and UQCRFS1), 2 core proteins (UQCRC1 and UQCRC2) and probably 6 low-molecular weight proteins. Requires heme b as cofactor.

It localises to the mitochondrion inner membrane. Its function is as follows. Component of the ubiquinol-cytochrome c reductase complex (complex III or cytochrome b-c1 complex) that is part of the mitochondrial respiratory chain. The b-c1 complex mediates electron transfer from ubiquinol to cytochrome c. Contributes to the generation of a proton gradient across the mitochondrial membrane that is then used for ATP synthesis. The sequence is that of Cytochrome b (MT-CYB) from Antaresia childreni (Children's python).